The sequence spans 211 residues: ATP phosphoribosyltransferase (211 aa).

The protein belongs to the ATP phosphoribosyltransferase family. Short subfamily. As to quaternary structure, heteromultimer composed of HisG and HisZ subunits.

The protein localises to the cytoplasm. The catalysed reaction is 1-(5-phospho-beta-D-ribosyl)-ATP + diphosphate = 5-phospho-alpha-D-ribose 1-diphosphate + ATP. It participates in amino-acid biosynthesis; L-histidine biosynthesis; L-histidine from 5-phospho-alpha-D-ribose 1-diphosphate: step 1/9. Functionally, catalyzes the condensation of ATP and 5-phosphoribose 1-diphosphate to form N'-(5'-phosphoribosyl)-ATP (PR-ATP). Has a crucial role in the pathway because the rate of histidine biosynthesis seems to be controlled primarily by regulation of HisG enzymatic activity. This Bacillus cereus (strain ATCC 14579 / DSM 31 / CCUG 7414 / JCM 2152 / NBRC 15305 / NCIMB 9373 / NCTC 2599 / NRRL B-3711) protein is ATP phosphoribosyltransferase.